A 507-amino-acid chain; its full sequence is Histidine ammonia-lyase (507 aa).

The 5-imidazolinone (Ala-Gly) cross-link spans 141 to 143 (ASG). Ser-142 is subject to 2,3-didehydroalanine (Ser).

The protein belongs to the PAL/histidase family. Contains an active site 4-methylidene-imidazol-5-one (MIO), which is formed autocatalytically by cyclization and dehydration of residues Ala-Ser-Gly.

It is found in the cytoplasm. It catalyses the reaction L-histidine = trans-urocanate + NH4(+). The protein operates within amino-acid degradation; L-histidine degradation into L-glutamate; N-formimidoyl-L-glutamate from L-histidine: step 1/3. In Burkholderia mallei (strain NCTC 10247), this protein is Histidine ammonia-lyase.